We begin with the raw amino-acid sequence, 524 residues long: Methyl-CpG-binding domain-containing protein 8 (524 aa).

The segment covering 45–60 (CSSLSPSSSASLAASA) has biased composition (low complexity). The tract at residues 45-151 (CSSLSPSSSA…EEELEDNEGQ (107 aa)) is disordered. The segment covering 75–84 (FNESAGSRKQ) has biased composition (polar residues). Basic and acidic residues predominate over residues 106 to 116 (RQRDDSSREEQ). A compositionally biased stretch (acidic residues) spans 136-149 (EEEDEGEEELEDNE). Residues 334-406 (VVNACDYGGY…QHYYLQSDNK (73 aa)) form the MBD domain.

Expressed in shoot meristems, roots (vasculature and tips), hypocotyls (vasculature), cotyledons (vasculature and hydathodes), young leaves, buds, flowers and stems. Detected in stomata.

It localises to the nucleus. In terms of biological role, probable transcriptional regulator. May regulates developmental traits such as flowering time. This is Methyl-CpG-binding domain-containing protein 8 (MBD8) from Arabidopsis thaliana (Mouse-ear cress).